The chain runs to 592 residues: Laccase PFICI_06862 (592 aa).

Positions 1 to 19 (MYIQTQFASLLLLAGTSLA) are cleaved as a signal peptide. N-linked (GlcNAc...) asparagine glycosylation occurs at Asn26. Plastocyanin-like domains lie at 32-142 (QWSS…WIAP) and 173-350 (VVIS…RYPG). Residues His78, His80, His123, and His125 each coordinate Cu cation. 3 N-linked (GlcNAc...) asparagine glycosylation sites follow: Asn370, Asn407, and Asn454. A Plastocyanin-like 3 domain is found at 445-563 (SDVQGGSMQN…AGQQVVLLEG (119 aa)). His475 provides a ligand contact to Cu cation. The N-linked (GlcNAc...) asparagine glycan is linked to Asn524.

Belongs to the multicopper oxidase family.

Its subcellular location is the cell surface. The protein operates within pigment biosynthesis; melanin biosynthesis. Laccase involved the biosynthesis of dihydroxynaphthalene (DHN)-melanin, a bluish-green pigment forming a dark layer in the conidial wall that protects the conidia from UV radiations. The first step of the pathway is the production of the pentaketide 1,3,6,8-tetrahydroxynaphthalene (1,3,6,8-THN or T4HN) by the polyketide synthase PfmaE though condensation of acetyl-CoA with malonyl-CoA. T4HN is not stable and easily oxidizes into the stable form flaviolin. T4HN is also substrate of the hydroxynaphthalene reductase PfmaG to yield scytalone. The scytalone dehydratase PfmaJ then reduces scytalone to 1,3,8-THN. 1,3,8-THN is then substrate of the hydroxynaphthalene reductase PfmaI to yield vermelone. Vermelone is further converted by the multicopper oxidase PfmaD to 1,8-DHN. Finally the laccase PFICI_06862 transforms 1,8-DHN to DHN-melanin. The roles of the 5-oxoprolinase PfmaA and the proline iminopeptidase PfmaB within the cluster have not been elucidated yet. This Pestalotiopsis fici (strain W106-1 / CGMCC3.15140) protein is Laccase PFICI_06862.